Consider the following 255-residue polypeptide: F-box/SPRY domain-containing protein 1 (255 aa).

The F-box domain maps to D3 to H51. In terms of domain architecture, B30.2/SPRY spans T61–L253.

The protein belongs to the FBXO45/Fsn family. Component of an E3 ubiquitin ligase complex composed of hiw and Fsn.

It is found in the synapse. The protein operates within protein modification; protein ubiquitination. Required in the presynaptic motoneuron to down-regulate the levels of wnd and restrain synaptic terminal growth at the neuromuscular junction (NMJ). This is F-box/SPRY domain-containing protein 1 from Drosophila persimilis (Fruit fly).